Reading from the N-terminus, the 907-residue chain is Alanine--tRNA ligase (907 aa).

Histidine 602, histidine 606, cysteine 706, and histidine 710 together coordinate Zn(2+).

This sequence belongs to the class-II aminoacyl-tRNA synthetase family. Requires Zn(2+) as cofactor.

The protein resides in the cytoplasm. It carries out the reaction tRNA(Ala) + L-alanine + ATP = L-alanyl-tRNA(Ala) + AMP + diphosphate. Catalyzes the attachment of alanine to tRNA(Ala) in a two-step reaction: alanine is first activated by ATP to form Ala-AMP and then transferred to the acceptor end of tRNA(Ala). Also edits incorrectly charged Ser-tRNA(Ala) and Gly-tRNA(Ala) via its editing domain. The sequence is that of Alanine--tRNA ligase from Thermofilum pendens (strain DSM 2475 / Hrk 5).